The sequence spans 669 residues: uncharacterized protein (669 aa).

A run of 12 helical transmembrane segments spans residues 9–29, 48–68, 87–107, 139–159, 186–206, 224–244, 259–279, 314–334, 345–365, 397–417, 444–464, and 470–490; these read PLVI…IFIA, FSWF…ILSV, FLSW…MFFG, WGIH…YFGF, AIDV…LGFG, SFAL…FSAI, LTLA…LYLL, WTVL…LFIA, FIFG…TVFG, YLPL…LFFI, AIMW…SGGL, and MTLI…FSLW.

Belongs to the BCCT transporter (TC 2.A.15) family.

Its subcellular location is the cell inner membrane. This is an uncharacterized protein from Haemophilus influenzae (strain ATCC 51907 / DSM 11121 / KW20 / Rd).